The following is a 180-amino-acid chain: Large ribosomal subunit protein uL5 (180 aa).

The protein belongs to the universal ribosomal protein uL5 family. Part of the 50S ribosomal subunit; part of the 5S rRNA/L5/L18/L25 subcomplex. Contacts the 5S rRNA and the P site tRNA. Forms a bridge to the 30S subunit in the 70S ribosome.

Functionally, this is one of the proteins that bind and probably mediate the attachment of the 5S RNA into the large ribosomal subunit, where it forms part of the central protuberance. In the 70S ribosome it contacts protein S13 of the 30S subunit (bridge B1b), connecting the 2 subunits; this bridge is implicated in subunit movement. Contacts the P site tRNA; the 5S rRNA and some of its associated proteins might help stabilize positioning of ribosome-bound tRNAs. The chain is Large ribosomal subunit protein uL5 from Gloeothece citriformis (strain PCC 7424) (Cyanothece sp. (strain PCC 7424)).